Here is a 379-residue protein sequence, read N- to C-terminus: Leukocyte elastase inhibitor A (379 aa).

The residue at position 300 (Ser-300) is a Phosphoserine.

This sequence belongs to the serpin family. Ov-serpin subfamily. Monomer.

It localises to the secreted. It is found in the cytoplasm. The protein resides in the cytolytic granule. Its subcellular location is the early endosome. Regulates the activity of the neutrophil proteases. The protein is Leukocyte elastase inhibitor A (Serpinb1a) of Rattus norvegicus (Rat).